The sequence spans 84 residues: U8-theraphotoxin-Hhn1a (84 aa).

The N-terminal stretch at Met1–Cys21 is a signal peptide. Intrachain disulfides connect Cys23-Cys35, Cys29-Cys44, Cys34-Cys67, Cys54-Cys75, and Cys69-Cys81.

This sequence belongs to the AVIT (prokineticin) family. Expressed by the venom gland.

The protein resides in the secreted. The protein is U8-theraphotoxin-Hhn1a of Cyriopagopus hainanus (Chinese bird spider).